We begin with the raw amino-acid sequence, 207 residues long: p-benzoquinone reductase (207 aa).

The Flavodoxin-like domain maps to 5-196; it reads IQIVFYSSYG…QIARFQGKHV (192 aa). Residues 11 to 16, 84 to 86, 119 to 125, and His140 each bind FMN; these read SSYGHI, TRF, and STASQHG. Tyr13 contributes to the NADP(+) binding site.

Belongs to the WrbA family. As to quaternary structure, homodimer. FMN serves as cofactor.

The enzyme catalyses 1,4-benzoquinone + NADPH + H(+) = hydroquinone + NADP(+). Its pathway is xenobiotic degradation; 4-nitrophenol degradation. Functionally, involved in the degradation of para-nitrophenol (PNP). Catalyzes the reduction of p-benzoquinone to hydroquinone. In Pseudomonas sp. (strain WBC-3), this protein is p-benzoquinone reductase (pnpB).